The primary structure comprises 159 residues: Transcriptional repressor NrdR (159 aa).

A disordered region spans residues 1 to 26; the sequence is MRCPFCAHDNSQVKDSRPSEDNTSIR. A zinc finger lies at 3–34; it reads CPFCAHDNSQVKDSRPSEDNTSIRRRRQCEGC. The segment covering 11 to 24 has biased composition (basic and acidic residues); sequence SQVKDSRPSEDNTS. Residues 49–139 enclose the ATP-cone domain; the sequence is VVVVKSGERR…VYRDFTEARD (91 aa).

The protein belongs to the NrdR family. Requires Zn(2+) as cofactor.

Negatively regulates transcription of bacterial ribonucleotide reductase nrd genes and operons by binding to NrdR-boxes. In Novosphingobium aromaticivorans (strain ATCC 700278 / DSM 12444 / CCUG 56034 / CIP 105152 / NBRC 16084 / F199), this protein is Transcriptional repressor NrdR.